Consider the following 350-residue polypeptide: Holliday junction branch migration complex subunit RuvB (350 aa).

A large ATPase domain (RuvB-L) region spans residues 1-186 (MAGHEEEDER…FGIPLRLDFY (186 aa)). Residues leucine 25, arginine 26, glycine 67, lysine 70, threonine 71, threonine 72, 133-135 (EDF), arginine 176, tyrosine 186, and arginine 223 contribute to the ATP site. Position 71 (threonine 71) interacts with Mg(2+). Positions 187–257 (ETDELVQIVT…IADAALNRLE (71 aa)) are small ATPAse domain (RuvB-S). Positions 260–350 (GRGLDAMDRR…VQPDLWSDAP (91 aa)) are head domain (RuvB-H). Residues arginine 296, arginine 315, and arginine 320 each coordinate DNA.

The protein belongs to the RuvB family. As to quaternary structure, homohexamer. Forms an RuvA(8)-RuvB(12)-Holliday junction (HJ) complex. HJ DNA is sandwiched between 2 RuvA tetramers; dsDNA enters through RuvA and exits via RuvB. An RuvB hexamer assembles on each DNA strand where it exits the tetramer. Each RuvB hexamer is contacted by two RuvA subunits (via domain III) on 2 adjacent RuvB subunits; this complex drives branch migration. In the full resolvosome a probable DNA-RuvA(4)-RuvB(12)-RuvC(2) complex forms which resolves the HJ.

The protein localises to the cytoplasm. The enzyme catalyses ATP + H2O = ADP + phosphate + H(+). Functionally, the RuvA-RuvB-RuvC complex processes Holliday junction (HJ) DNA during genetic recombination and DNA repair, while the RuvA-RuvB complex plays an important role in the rescue of blocked DNA replication forks via replication fork reversal (RFR). RuvA specifically binds to HJ cruciform DNA, conferring on it an open structure. The RuvB hexamer acts as an ATP-dependent pump, pulling dsDNA into and through the RuvAB complex. RuvB forms 2 homohexamers on either side of HJ DNA bound by 1 or 2 RuvA tetramers; 4 subunits per hexamer contact DNA at a time. Coordinated motions by a converter formed by DNA-disengaged RuvB subunits stimulates ATP hydrolysis and nucleotide exchange. Immobilization of the converter enables RuvB to convert the ATP-contained energy into a lever motion, pulling 2 nucleotides of DNA out of the RuvA tetramer per ATP hydrolyzed, thus driving DNA branch migration. The RuvB motors rotate together with the DNA substrate, which together with the progressing nucleotide cycle form the mechanistic basis for DNA recombination by continuous HJ branch migration. Branch migration allows RuvC to scan DNA until it finds its consensus sequence, where it cleaves and resolves cruciform DNA. This chain is Holliday junction branch migration complex subunit RuvB, found in Rhodospirillum rubrum (strain ATCC 11170 / ATH 1.1.1 / DSM 467 / LMG 4362 / NCIMB 8255 / S1).